Reading from the N-terminus, the 834-residue chain is Protein argonaute (834 aa).

Residues 210–326 enclose the PAZ domain; that stretch reads SLLQILMEYT…LPIEFCFVVK (117 aa). The Piwi domain maps to 500-799; the sequence is YLFFILDKNS…VSNLARYQDV (300 aa).

Belongs to the argonaute family. Ago subfamily. Ago1, chp1 and tas3 interact to form the core of the RNA-induced transcriptional silencing (RITS) complex. The RITS complex interacts with the RDRC complex via interaction between ago1 and hrr1. Clr4 has a role in mediating this interaction. Component of the argonaute siRNA chaperone (ARC) complex composed of ago1, arb1 and arb2. Interacts with arb1.

It is found in the cytoplasm. Its subcellular location is the nucleus. The protein localises to the chromosome. The protein resides in the centromere. It localises to the telomere. Functionally, required for G1 arrest and mating in response to nitrogen starvation. Ago1 regulation of cytokinesis and cell cycle checkpoints occurs downstream of dcr1. Required, indirectly, for regulated hyperphosphorylation of cdc2. Has a role in the RNA interference (RNAi) pathway which is important for heterochromatin formation, accurate chromosome segregation, centromere cohesion and telomere function during mitosis and meiosis. Required for silencing at the centromeres and for initiation of transcriptionally silent heterochromatin at the mating type locus. Promotes histone H3K9 methylation necessary for centromere function. Required for recruitment of swi6 and cohesin to an ectopic dg repeat. A member of the RNA-induced transcriptional silencing (RITS) complex which is involved in the biosynthesis of dsRNA from primer siRNAs provided by the RNA-directed RNA polymerase (RDRC) complex. Has ribonuclease H-like cleavage (slicing) activity towards target messages complementary to siRNA and can direct site-specific cleavage of RNA substrates via siRNA. Slicing activity is required for both post-transcriptional and transcriptional gene silencing as well as for histone H3 'Lys-10' methylation spreading, conversion of double-stranded siRNA to single-stranded siRNA and siRNA-dependent association of ago1 with chromatin. A member of the argonaute siRNA chaperone (ARC) complex which is required for histone H3K9 methylation, heterochromatin assembly and siRNA generation. The ARC complex contains mostly double-stranded siRNA. The protein is Protein argonaute (ago1) of Schizosaccharomyces pombe (strain 972 / ATCC 24843) (Fission yeast).